The chain runs to 440 residues: Platelet-activating factor acetylhydrolase (440 aa).

The signal sequence occupies residues 1 to 21; that stretch reads MVPLKLQALFCLLCCLPWVHP. Residues asparagine 59, asparagine 75, and asparagine 199 are each glycosylated (N-linked (GlcNAc...) asparagine). The Nucleophile role is filled by serine 272. Catalysis depends on charge relay system residues aspartate 295 and histidine 350.

It belongs to the AB hydrolase superfamily. Lipase family. N-glycosylated. As to expression, plasma.

It localises to the secreted. The protein resides in the extracellular space. The enzyme catalyses a 1-O-alkyl-2-acetyl-sn-glycero-3-phosphocholine + H2O = a 1-O-alkyl-sn-glycero-3-phosphocholine + acetate + H(+). It carries out the reaction 1-O-decyl-2-acetyl-sn-glycero-3-phosphocholine + H2O = 1-O-decyl-sn-glycero-3-phosphocholine + acetate + H(+). It catalyses the reaction 1-O-dodecyl-2-acetyl-sn-glycero-3-phosphocholine + H2O = 1-O-dodecyl-sn-glycero-3-phosphocholine + acetate + H(+). The catalysed reaction is 1-O-tetradecyl-2-acetyl-sn-glycero-3-phosphocholine + H2O = 1-O-tetradecyl-sn-glycero-3-phosphocholine + acetate + H(+). The enzyme catalyses 1-O-hexadecyl-2-acetyl-sn-glycero-3-phosphocholine + H2O = 1-O-hexadecyl-sn-glycero-3-phosphocholine + acetate + H(+). It carries out the reaction 1-O-octadecyl-2-acetyl-sn-glycero-3-phosphocholine + H2O = 1-O-octadecyl-sn-glycero-3-phosphocholine + acetate + H(+). It catalyses the reaction 1-hexadecanoyl-2-acetyl-sn-glycero-3-phosphocholine + H2O = 1-hexadecanoyl-sn-glycero-3-phosphocholine + acetate + H(+). The catalysed reaction is 1-hexadecanoyl-2-propionyl-sn-glycero-3-phosphocholine + H2O = propanoate + 1-hexadecanoyl-sn-glycero-3-phosphocholine + H(+). The enzyme catalyses 1-hexadecanoyl-2-butanoyl-sn-glycero-3-phosphocholine + H2O = butanoate + 1-hexadecanoyl-sn-glycero-3-phosphocholine + H(+). It carries out the reaction 1-hexadecanoyl-2-pentanoyl-sn-glycero-3-phosphocholine + H2O = pentanoate + 1-hexadecanoyl-sn-glycero-3-phosphocholine + H(+). It catalyses the reaction 1-hexadecanoyl-2-glutaroyl-sn-glycero-3-phosphocholine + H2O = glutarate + 1-hexadecanoyl-sn-glycero-3-phosphocholine + H(+). The catalysed reaction is 1-hexadecanoyl-2-(5-oxopentanoyl)-sn-glycero-3-phosphocholine + H2O = 5-oxopentanoate + 1-hexadecanoyl-sn-glycero-3-phosphocholine + H(+). The enzyme catalyses 1-hexadecanoyl-2-(9-oxononanoyl)-sn-glycero-3-phosphocholine + H2O = 9-oxononanoate + 1-hexadecanoyl-sn-glycero-3-phosphocholine + H(+). It carries out the reaction 1-hexadecanoyl-2-[9-hydroperoxy-(10E-octadecenoyl)]-sn-glycero-3-phosphocholine + H2O = 9-hydroperoxy-10E-octadecenoate + 1-hexadecanoyl-sn-glycero-3-phosphocholine + H(+). It catalyses the reaction 1-hexadecanoyl-2-(10-hydroperoxy-8E-octadecenoyl)-sn-glycero-3-phosphocholine + H2O = 10-hydroperoxy-(8E)-octadecenoate + 1-hexadecanoyl-sn-glycero-3-phosphocholine + H(+). Its function is as follows. Lipoprotein-associated calcium-independent phospholipase A2 involved in phospholipid catabolism during inflammatory and oxidative stress response. At the lipid-aqueous interface, hydrolyzes the ester bond of fatty acyl group attached at sn-2 position of phospholipids (phospholipase A2 activity). Specifically targets phospholipids with a short-chain fatty acyl group at sn-2 position. Can hydrolyze phospholipids with long fatty acyl chains, only if they carry oxidized functional groups. Hydrolyzes and inactivates platelet-activating factor (PAF, 1-O-alkyl-2-acetyl-sn-glycero-3-phosphocholine), a potent pro-inflammatory signaling lipid that acts through PTAFR on various innate immune cells. Hydrolyzes oxidatively truncated phospholipids carrying an aldehyde group at omega position, preventing their accumulation in lipoprotein particles and uncontrolled pro-inflammatory effects. As part of high-density lipoprotein (HDL) particles, can hydrolyze phospholipids having long-chain fatty acyl hydroperoxides at sn-2 position and protect against potential accumulation of these oxylipins in the vascular wall. Catalyzes the release from membrane phospholipids of F2-isoprostanes, lipid biomarkers of cellular oxidative damage. This is Platelet-activating factor acetylhydrolase (Pla2g7) from Mus musculus (Mouse).